The sequence spans 439 residues: Proline--tRNA ligase (439 aa).

It belongs to the class-II aminoacyl-tRNA synthetase family. ProS type 2 subfamily. Homodimer.

It is found in the cytoplasm. It carries out the reaction tRNA(Pro) + L-proline + ATP = L-prolyl-tRNA(Pro) + AMP + diphosphate. Its function is as follows. Catalyzes the attachment of proline to tRNA(Pro) in a two-step reaction: proline is first activated by ATP to form Pro-AMP and then transferred to the acceptor end of tRNA(Pro). In Beijerinckia indica subsp. indica (strain ATCC 9039 / DSM 1715 / NCIMB 8712), this protein is Proline--tRNA ligase.